A 679-amino-acid chain; its full sequence is MSLSKSKVKSKIKELNEKLKLYNHHYYNKNESLVSDEYYDAKLLELENIRDNFPEEYNQVFQKDFSKSVLEKVNHLDEQDVKLKKEKHQKLMLSLNKAYSFEDLERYTNRINTFVGNNHQYILQEKIDGVSISLYYENGILTKALTRGDGIYGENVTHNALNIKDIPKTINIKENIELRGEIFFSLKLFESLKNEFLDKQDGTKNKKWNTPRNKASGILKSLKTTDESSWLSCFIYEVVSPENFNLKTQKQLFDFLKIQGFNLPKFEFIENENLIENFITNFKFEDDQRDYEIDGLVIKLNDLSLYDLLGKTSKFFHHSIAYKFRKKFVMTKIEDIFVTVGRTGLITYNAKLQEVVLNGSKIKAATLHNYEYIKNIKINIGDKVYIEKAGEIIPRVVKLVSPKNDQNYFSPIEFCPSCKNKLSWSENMLNQFCLNPDCIEKKIQKLKYFVSKDGMEIQELGGKKIELFFAKGWVKKIEDIYNLKNNYDDLLKLENFQEHSVNVLLHKIEESKDVYTWKLIAALGIKNIGKKLAKSLVKIIFENDQKNLLSLLEFNYDELEKYDEFGSVKIESLKEFFANDENRNLIQFLDQNGFELKMEKEIIQSTKLENKTFLITGTLEKPRDFYKNLIIQNGGIISSSISKKLDYLIVGQNPGSKEKKAMELNIKIIDEEFLKKMLE.

Residues 36–40 (DEYYD) and 94–95 (SL) contribute to the NAD(+) site. The active-site N6-AMP-lysine intermediate is the lysine 126. Positions 147, 181, 299, and 323 each coordinate NAD(+). Zn(2+)-binding residues include cysteine 415, cysteine 418, cysteine 433, and cysteine 438. The BRCT domain maps to 603–679 (IQSTKLENKT…DEEFLKKMLE (77 aa)).

It belongs to the NAD-dependent DNA ligase family. LigA subfamily. Mg(2+) is required as a cofactor. The cofactor is Mn(2+).

It catalyses the reaction NAD(+) + (deoxyribonucleotide)n-3'-hydroxyl + 5'-phospho-(deoxyribonucleotide)m = (deoxyribonucleotide)n+m + AMP + beta-nicotinamide D-nucleotide.. Its function is as follows. DNA ligase that catalyzes the formation of phosphodiester linkages between 5'-phosphoryl and 3'-hydroxyl groups in double-stranded DNA using NAD as a coenzyme and as the energy source for the reaction. It is essential for DNA replication and repair of damaged DNA. The sequence is that of DNA ligase from Mycoplasmopsis pulmonis (strain UAB CTIP) (Mycoplasma pulmonis).